A 644-amino-acid chain; its full sequence is 1-deoxy-D-xylulose-5-phosphate synthase (644 aa).

Residues His72 and Gly113–Ala115 contribute to the thiamine diphosphate site. Asp144 serves as a coordination point for Mg(2+). Thiamine diphosphate contacts are provided by residues Gly145–Ala146, Asn174, Tyr287, and Glu370. Asn174 contributes to the Mg(2+) binding site.

Belongs to the transketolase family. DXPS subfamily. Homodimer. Mg(2+) is required as a cofactor. The cofactor is thiamine diphosphate.

The catalysed reaction is D-glyceraldehyde 3-phosphate + pyruvate + H(+) = 1-deoxy-D-xylulose 5-phosphate + CO2. Its pathway is metabolic intermediate biosynthesis; 1-deoxy-D-xylulose 5-phosphate biosynthesis; 1-deoxy-D-xylulose 5-phosphate from D-glyceraldehyde 3-phosphate and pyruvate: step 1/1. Functionally, catalyzes the acyloin condensation reaction between C atoms 2 and 3 of pyruvate and glyceraldehyde 3-phosphate to yield 1-deoxy-D-xylulose-5-phosphate (DXP). The polypeptide is 1-deoxy-D-xylulose-5-phosphate synthase (Prochlorococcus marinus (strain MIT 9303)).